We begin with the raw amino-acid sequence, 739 residues long: Copalyl diphosphate synthase 1 (739 aa).

Lys154 is a binding site for substrate. 2 residues coordinate Mg(2+): Asp287 and Asp289. Positions 287 to 290 match the DXDD motif motif; it reads DADD. Residue Lys373 coordinates substrate.

This sequence belongs to the terpene synthase family. Mg(2+) serves as cofactor.

The catalysed reaction is (2E,6E,10E)-geranylgeranyl diphosphate = (+)-copalyl diphosphate. It functions in the pathway secondary metabolite biosynthesis; terpenoid biosynthesis. Monofunctional diterpene synthase converting geranylgeranyl diphosphate to copalyl diphosphate. The protein is Copalyl diphosphate synthase 1 (CPS1) of Selaginella moellendorffii (Spikemoss).